We begin with the raw amino-acid sequence, 433 residues long: Ribosomal protein uS12 methylthiotransferase RimO (433 aa).

The 117-residue stretch at 6-122 folds into the MTTase N-terminal domain; the sequence is QSIFLLSLGC…IISVLGGSYR (117 aa). C15, C51, C85, C146, C150, and C153 together coordinate [4Fe-4S] cluster. Residues 132-362 enclose the Radical SAM core domain; it reads LTPPHYAWLK…MELQESIAAE (231 aa). A TRAM domain is found at 365–432; the sequence is RELEGRVMKV…AYELHGRVND (68 aa).

This sequence belongs to the methylthiotransferase family. RimO subfamily. [4Fe-4S] cluster is required as a cofactor.

It is found in the cytoplasm. It catalyses the reaction L-aspartate(89)-[ribosomal protein uS12]-hydrogen + (sulfur carrier)-SH + AH2 + 2 S-adenosyl-L-methionine = 3-methylsulfanyl-L-aspartate(89)-[ribosomal protein uS12]-hydrogen + (sulfur carrier)-H + 5'-deoxyadenosine + L-methionine + A + S-adenosyl-L-homocysteine + 2 H(+). Catalyzes the methylthiolation of an aspartic acid residue of ribosomal protein uS12. This Prosthecochloris aestuarii (strain DSM 271 / SK 413) protein is Ribosomal protein uS12 methylthiotransferase RimO.